The chain runs to 331 residues: MKQTVYIASPESQQIHVWNLNHDGTLTLTQVVDVPGQVQPMVVSPDKRYLYVGVRPEFRVLAYRIAPDDGALTFAAESALPGSPTHISTDHQGRFVFVGSYNAGSVSVTRLEDGLPVEVVDVVEGLDGCHSANITPDNRTLWVPALKQDRICLFTVSDDGYLAAQDPAEVTTVEGAGPRHMVFHPNEQYAYCVNELNSSVDVWELKDPHGNIECVQTLDMMPADFSDTRWAADIHITPDGRHLYACDRTASLITVFSVSEDGSVLTKEGYQSTETQPRGFNVDHSGKYLIAAGQKSHHIAVYEIHGEQGLLTEKGRYAVGQGPMWVVVNAH.

An N6-acetyllysine modification is found at lysine 287.

This sequence belongs to the cycloisomerase 2 family.

It catalyses the reaction 6-phospho-D-glucono-1,5-lactone + H2O = 6-phospho-D-gluconate + H(+). Its pathway is carbohydrate degradation; pentose phosphate pathway; D-ribulose 5-phosphate from D-glucose 6-phosphate (oxidative stage): step 2/3. Functionally, catalyzes the hydrolysis of 6-phosphogluconolactone to 6-phosphogluconate. The polypeptide is 6-phosphogluconolactonase (Escherichia fergusonii (strain ATCC 35469 / DSM 13698 / CCUG 18766 / IAM 14443 / JCM 21226 / LMG 7866 / NBRC 102419 / NCTC 12128 / CDC 0568-73)).